Consider the following 248-residue polypeptide: Ubiquinone biosynthesis O-methyltransferase (248 aa).

The S-adenosyl-L-methionine site is built by Arg41, Gly72, Asp93, and Met136.

The protein belongs to the methyltransferase superfamily. UbiG/COQ3 family.

The catalysed reaction is a 3-demethylubiquinol + S-adenosyl-L-methionine = a ubiquinol + S-adenosyl-L-homocysteine + H(+). It carries out the reaction a 3-(all-trans-polyprenyl)benzene-1,2-diol + S-adenosyl-L-methionine = a 2-methoxy-6-(all-trans-polyprenyl)phenol + S-adenosyl-L-homocysteine + H(+). It participates in cofactor biosynthesis; ubiquinone biosynthesis. Functionally, O-methyltransferase that catalyzes the 2 O-methylation steps in the ubiquinone biosynthetic pathway. The protein is Ubiquinone biosynthesis O-methyltransferase of Rhizobium rhizogenes (strain K84 / ATCC BAA-868) (Agrobacterium radiobacter).